The chain runs to 166 residues: uncharacterized protein (166 aa).

Positions 28 to 55 are disordered; that stretch reads SRQVHPPWPVPCKSKLQEQDSSESKESK. Basic and acidic residues predominate over residues 42–55; the sequence is KLQEQDSSESKESK. The 97-residue stretch at 67-163 folds into the HTH araC/xylS-type domain; sequence QNAMLYIENN…NYTPKQFKRT (97 aa). 2 consecutive DNA-binding regions (H-T-H motif) follow at residues 84 to 105 and 130 to 153; these read DTVA…KLAT and VTET…KKRT.

This is an uncharacterized protein from Pseudoalteromonas carrageenovora (Alteromonas carrageenovora).